A 254-amino-acid chain; its full sequence is Probable transcriptional regulatory protein Saro_0419 (254 aa).

The span at 1 to 14 shows a compositional bias: basic residues; the sequence is MAGHSKFKNIMHRK. Residues 1 to 22 are disordered; that stretch reads MAGHSKFKNIMHRKGAQDKKRS.

The protein belongs to the TACO1 family.

The protein localises to the cytoplasm. The sequence is that of Probable transcriptional regulatory protein Saro_0419 from Novosphingobium aromaticivorans (strain ATCC 700278 / DSM 12444 / CCUG 56034 / CIP 105152 / NBRC 16084 / F199).